The chain runs to 334 residues: Holliday junction branch migration complex subunit RuvB (334 aa).

The tract at residues 1–181 is large ATPase domain (RuvB-L); that stretch reads MQDRLISGTE…FGIVQRLEFY (181 aa). ATP is bound by residues isoleucine 20, arginine 21, glycine 62, lysine 65, threonine 66, threonine 67, 128-130, arginine 171, tyrosine 181, and arginine 218; that span reads EDY. Threonine 66 is a binding site for Mg(2+). Residues 182 to 252 form a small ATPAse domain (RuvB-S) region; the sequence is SVEDLTHIVS…MAQRALDMLN (71 aa). Residues 255 to 334 are head domain (RuvB-H); that stretch reads KAGLDTLDRR…FGMTPPEPKN (80 aa). Residues arginine 310 and arginine 315 each contribute to the DNA site.

It belongs to the RuvB family. Homohexamer. Forms an RuvA(8)-RuvB(12)-Holliday junction (HJ) complex. HJ DNA is sandwiched between 2 RuvA tetramers; dsDNA enters through RuvA and exits via RuvB. An RuvB hexamer assembles on each DNA strand where it exits the tetramer. Each RuvB hexamer is contacted by two RuvA subunits (via domain III) on 2 adjacent RuvB subunits; this complex drives branch migration. In the full resolvosome a probable DNA-RuvA(4)-RuvB(12)-RuvC(2) complex forms which resolves the HJ.

It is found in the cytoplasm. The enzyme catalyses ATP + H2O = ADP + phosphate + H(+). In terms of biological role, the RuvA-RuvB-RuvC complex processes Holliday junction (HJ) DNA during genetic recombination and DNA repair, while the RuvA-RuvB complex plays an important role in the rescue of blocked DNA replication forks via replication fork reversal (RFR). RuvA specifically binds to HJ cruciform DNA, conferring on it an open structure. The RuvB hexamer acts as an ATP-dependent pump, pulling dsDNA into and through the RuvAB complex. RuvB forms 2 homohexamers on either side of HJ DNA bound by 1 or 2 RuvA tetramers; 4 subunits per hexamer contact DNA at a time. Coordinated motions by a converter formed by DNA-disengaged RuvB subunits stimulates ATP hydrolysis and nucleotide exchange. Immobilization of the converter enables RuvB to convert the ATP-contained energy into a lever motion, pulling 2 nucleotides of DNA out of the RuvA tetramer per ATP hydrolyzed, thus driving DNA branch migration. The RuvB motors rotate together with the DNA substrate, which together with the progressing nucleotide cycle form the mechanistic basis for DNA recombination by continuous HJ branch migration. Branch migration allows RuvC to scan DNA until it finds its consensus sequence, where it cleaves and resolves cruciform DNA. In Acinetobacter baumannii (strain AB307-0294), this protein is Holliday junction branch migration complex subunit RuvB.